A 714-amino-acid polypeptide reads, in one-letter code: NCK-interacting protein with SH3 domain (714 aa).

An SH3 domain is found at 1-58; the sequence is MYRALYAFRSAEPNAMAFAAGETFLVLERSSTHWWLAARARSGETGYVPPAYLHRLQG. 2 disordered regions span residues 103 to 126 and 139 to 298; these read TLSRRGTSASSATVMTPSTSDHHL and RTGF…AAET. The span at 106–121 shows a compositional bias: polar residues; sequence RRGTSASSATVMTPST. Ser120 carries the post-translational modification Phosphoserine. The Nuclear localization signal signature appears at 168-185; that stretch reads RRAAPTTPPPPVKRRDRE. Thr174 carries the post-translational modification Phosphothreonine. A compositionally biased stretch (low complexity) spans 200 to 215; it reads SGGSSVSSGSSASSTS. Polar residues predominate over residues 216–226; that stretch reads MDTLYTGSSPS. The segment covering 252 to 263 has biased composition (pro residues); the sequence is QPSPSKAPSPEP. A phosphoserine mark is found at Ser260, Ser286, and Ser673.

In terms of assembly, associates with the intermediate filaments, vimentin and desmin. Binds the first and third SH3 domains of NCK. Binds the proline-rich domains of N-WASP through its SH3 domain. Similarly, binds diaphanous protein homolog 1 (DRF1). Binds the SH3 domains of GRB2 through its proline-rich domains. Interacts with FASLG.

It localises to the nucleus. Has an important role in stress fiber formation induced by active diaphanous protein homolog 1 (DRF1). Induces microspike formation, in vivo. In vitro, stimulates N-WASP-induced ARP2/3 complex activation in the absence of CDC42. May play an important role in the maintenance of sarcomere and/or in the assembly of myofibrils into sarcomeres. Implicated in regulation of actin polymerization and cell adhesion. This Mus musculus (Mouse) protein is NCK-interacting protein with SH3 domain (Nckipsd).